Reading from the N-terminus, the 129-residue chain is Histone H2A (129 aa).

It belongs to the histone H2A family. The nucleosome is a histone octamer containing two molecules each of H2A, H2B, H3 and H4 assembled in one H3-H4 heterotetramer and two H2A-H2B heterodimers. The octamer wraps approximately 147 bp of DNA.

Its subcellular location is the nucleus. It is found in the chromosome. Its function is as follows. Core component of nucleosome. Nucleosomes wrap and compact DNA into chromatin, limiting DNA accessibility to the cellular machineries which require DNA as a template. Histones thereby play a central role in transcription regulation, DNA repair, DNA replication and chromosomal stability. DNA accessibility is regulated via a complex set of post-translational modifications of histones, also called histone code, and nucleosome remodeling. The polypeptide is Histone H2A (H2A-II) (Chlamydomonas reinhardtii (Chlamydomonas smithii)).